The sequence spans 297 residues: HTH-type transcriptional regulator ArgP (297 aa).

The region spanning 4 to 60 (PDYRTLQALDAVIRERGFERAAQKLCITQSAVSQRIKQLENMFGQPLLVRTVPPRPT) is the HTH lysR-type domain. The H-T-H motif DNA-binding region spans 21–40 (FERAAQKLCITQSAVSQRIK).

The protein belongs to the LysR transcriptional regulatory family. As to quaternary structure, homodimer.

Functionally, controls the transcription of genes involved in arginine and lysine metabolism. This chain is HTH-type transcriptional regulator ArgP, found in Salmonella typhi.